The sequence spans 151 residues: D-aminoacyl-tRNA deacylase (151 aa).

The short motif at 142–143 (GP) is the Gly-cisPro motif, important for rejection of L-amino acids element.

Belongs to the DTD family. In terms of assembly, homodimer.

It localises to the cytoplasm. The enzyme catalyses glycyl-tRNA(Ala) + H2O = tRNA(Ala) + glycine + H(+). It carries out the reaction a D-aminoacyl-tRNA + H2O = a tRNA + a D-alpha-amino acid + H(+). In terms of biological role, an aminoacyl-tRNA editing enzyme that deacylates mischarged D-aminoacyl-tRNAs. Also deacylates mischarged glycyl-tRNA(Ala), protecting cells against glycine mischarging by AlaRS. Acts via tRNA-based rather than protein-based catalysis; rejects L-amino acids rather than detecting D-amino acids in the active site. By recycling D-aminoacyl-tRNA to D-amino acids and free tRNA molecules, this enzyme counteracts the toxicity associated with the formation of D-aminoacyl-tRNA entities in vivo and helps enforce protein L-homochirality. The sequence is that of D-aminoacyl-tRNA deacylase from Psychrobacter cryohalolentis (strain ATCC BAA-1226 / DSM 17306 / VKM B-2378 / K5).